A 389-amino-acid chain; its full sequence is MRPLVAARRRAAACCALAACMLALAFAPAAARAERLKDLAQIQGVRDNPLIGYGLVVGLDGTGDQTMQTPFTTQTLANMLANLGISINNGSANGGGSSAMTNMQLKNVAAVMVTATLPPFARPGEAIDVTVSSLGNAKSLRGGTLLLTPLKGADGQVYALAQGNMAVGGAGASANGSRVQVNQLAAGRIAGGAIVERSVPNAVAQMNGVLQLQLNDMDYGTAQRIVSAVNSSFGAGTATALDGRTIQLTAPADSAQQVAFMARLQNLEVSPERAAAKVILNARTGSIVMNQMVTLQNCAVAHGNLSVVVNTQPVVSQPGPFSNGQTVVAQQSQIQLKQDNGSLRMVTAGANLAEVVKALNSLGATPADLMSILQAMKAAGALRADLEII.

Positions 1-33 are cleaved as a signal peptide; the sequence is MRPLVAARRRAAACCALAACMLALAFAPAAARA.

This sequence belongs to the FlgI family. As to quaternary structure, the basal body constitutes a major portion of the flagellar organelle and consists of four rings (L,P,S, and M) mounted on a central rod.

It localises to the periplasm. The protein localises to the bacterial flagellum basal body. Assembles around the rod to form the L-ring and probably protects the motor/basal body from shearing forces during rotation. This Burkholderia mallei (strain ATCC 23344) protein is Flagellar P-ring protein.